Reading from the N-terminus, the 1026-residue chain is Vacuolar protein sorting-associated protein 18 homolog (1026 aa).

A coiled-coil region spans residues I858–R896. The RING-type; degenerate zinc finger occupies C906–L932.

As to quaternary structure, probable core component of at least two putative endosomal tethering complexes, the homotypic fusion and vacuole protein sorting (HOPS) complex and the class C core vacuole/endosome tethering (CORVET) complex. Their common core is composed of the class C Vps proteins vps-11, vps-16 and vps-18, which in HOPS further associates with vps-33.1, vps-39 and vps-41 and in CORVET with vps-8 and vps-33.2. In hermaphrodites, expressed in coelomocytes and gonadal sheath cells.

Its subcellular location is the cytoplasm. It localises to the late endosome membrane. It is found in the lysosome membrane. The protein localises to the early endosome. The protein resides in the cytoplasmic vesicle. Its subcellular location is the autophagosome. It localises to the clathrin-coated vesicle. Its function is as follows. Plays a role in vesicle-mediated protein trafficking to lysosomal compartments including the endocytic membrane transport and autophagic pathways. Believed to act as a core component of the putative HOPS and CORVET endosomal tethering complexes which are proposed to be involved in the rab-5-to-rab-7 endosome conversion probably implicating sand-1, and via binding SNAREs and SNARE complexes to mediate tethering and docking events during SNARE-mediated membrane fusion. The HOPS complex is proposed to be recruited to rab-7 on the late endosomal membrane and to regulate late endocytic, phagocytic and autophagic traffic towards lysosomes. Within the HOPS complex, contributes to the normal development of gut granules in intestinal cells of the embryo, and also promotes the trafficking of embryonic intestinal gut granules away from lysosomes. The CORVET complex is proposed to function as a rab-5 effector to mediate early endosome fusion probably in specific endosome subpopulations. Required for fusion of endosomes and autophagosomes with lysosomes. Plays a role in the degradation of apoptotic cells during programmed cell death. The chain is Vacuolar protein sorting-associated protein 18 homolog from Caenorhabditis elegans.